A 989-amino-acid polypeptide reads, in one-letter code: MSNSNTTQETLEIMKESEKKLVEESVNKNKFISKTPSKEEIEKESEDTSLRQETQRRTSNHGHARKRAKSNSKLKLVRSLAVCEESSAPFVDGPLETQDIIQLHISCPSDKEEEKSTKDVSEKEDKDKNKEKVPRRMLSRDSSQEYTDSTGIDLHEFLVNTLKKNPRDRMMLLKLEQEILDFINDNNNQFKKFPQMTSYHRMLLHRVAAYFGMDHNVDQTGKAVIINKTSNTRIPEQRFSEHIKDEKNTEFQQRFILKRDDASMDRDDNQIRVPLQDGRRSKSIEEREEEYQRVRERIFARETGQNGYLNDIRGNREGLSRTSSSRQSSTDSELKSLEPRPWSSTDSDGSVRSMRPPVTKASSFSGISILTRGDSIGSSKGGSAGRISRPGMALGAPEVCNQVTSSQSVRGLLPCTAQQQQQQQQQLPALPPTPQQQPPLNNHMISQADDLSNPFGQMSLSRQGSTEAADPSSALFQPPLISQHPQQTSFIMASTGQPLPTSNYSTSSHAPPTQQVLPPQGYMQPPQQIQVSYYSPGQYPNSNQQYRPLSHPVAYSPQRGQQLPQPSQQPGLQPMMPNQQQAAYQGMIGVQQPQNQGLLSNQRSGMGGQMQGLVVQYTPLPSYQVPVGNDSQNVVQPPFQQPMLVPASQSVQGALPAGGVPVYYSMIPPAQQNGTSPSVGFLQPPGSEQYQMPQSPSPCSPPQMPQQYSGVSPSGPGVVVMQLNVPNGPQPPQNPSMVQWSHCKYYSMDQRGQKPGDLYSPESSPQANTQMSSSPVTSPTQSPAPSPVTSLSNVCTGLSPLPVLTQFPRPGGPAQGDGRYSLLGQPLQYNLSICPPLLHGQSAYSVHQGQSGLKHGNRSKRQALKSASTDLGTTDVVLGRVLEVTDLPEGITRTEADKLFTQLAMSGAKIQWLKDAQGLPGGGGGDNGGTAENGRHSDLAALYTIVAVFPSPLAAQNASLRLNNSVSRFKLRVAKKNYDLRILERASSQ.

Disordered regions lie at residues 23–71 and 106–147; these read EESV…AKSN and SCPS…QEYT. The segment covering 36–56 has biased composition (basic and acidic residues); the sequence is PSKEEIEKESEDTSLRQETQR. A Phosphoserine modification is found at Ser37. Basic residues predominate over residues 58 to 71; that stretch reads TSNHGHARKRAKSN. Residues 109–143 are compositionally biased toward basic and acidic residues; that stretch reads SDKEEEKSTKDVSEKEDKDKNKEKVPRRMLSRDSS. Ser143 bears the Phosphoserine mark. In terms of domain architecture, R3H spans 169-232; sequence RMMLLKLEQE…AVIINKTSNT (64 aa). The SUZ domain occupies 233-303; that stretch reads RIPEQRFSEH…VRERIFARET (71 aa). 7 disordered regions span residues 267–288, 306–390, 416–479, 493–524, 674–738, 751–793, and 848–867; these read DDNQIRVPLQDGRRSKSIEERE, NGYL…ISRP, TAQQ…FQPP, ASTGQPLPTSNYSTSSHAPPTQQVLPPQGYMQ, GTSP…PSMV, RGQK…SLSN, and QGQSGLKHGNRSKRQALKSA. Basic and acidic residues predominate over residues 277 to 288; the sequence is DGRRSKSIEERE. Positions 320 to 331 are enriched in low complexity; sequence SRTSSSRQSSTD. A phosphoserine mark is found at Ser344, Ser347, and Ser363. Low complexity predominate over residues 416 to 428; sequence TAQQQQQQQQQLP. 2 stretches are compositionally biased toward polar residues: residues 454-466 and 493-517; these read PFGQMSLSRQGST and ASTGQPLPTSNYSTSSHAPPTQQVL. Residues 695 to 704 are compositionally biased toward pro residues; it reads SPSPCSPPQM. Residues 705-727 show a composition bias toward low complexity; it reads PQQYSGVSPSGPGVVVMQLNVPN. Residues 761–771 show a composition bias toward polar residues; the sequence is PESSPQANTQM. Positions 772 to 790 are enriched in low complexity; it reads SSSPVTSPTQSPAPSPVTS. 2 positions are modified to phosphoserine: Ser866 and Ser868. A phosphothreonine mark is found at Thr869 and Thr873.

The protein localises to the nucleus. This Bos taurus (Bovine) protein is R3H domain-containing protein 2 (R3HDM2).